Consider the following 906-residue polypeptide: Peroxisomal hydratase-dehydrogenase-epimerase (906 aa).

Short-chain dehydrogenase like regions lie at residues 5–228 (DFKD…SSAE) and 319–532 (SLKD…GTDD). Positions 13, 52, 98, and 131 each coordinate NADP(+). Residues serine 149 and tyrosine 163 each act as proton donor in the active site. Residues tyrosine 163 and lysine 167 each coordinate NADP(+). Residue tyrosine 163 is the Proton acceptor of the active site. The active-site Lowers pKa of active site Tyr is the lysine 167. Tyrosine 467 acts as the Proton acceptor in catalysis. Residues 600 to 633 (AVGGDDDDDDEDEEEDEGDEEEDEEDEEEDDPVW) form a disordered region. Over residues 603-630 (GDDDDDDEDEEEDEGDEEEDEEDEEEDD) the composition is skewed to acidic residues. Histidine 699, glycine 700, lysine 729, tyrosine 757, aspartate 808, asparagine 810, glycine 831, phenylalanine 856, threonine 857, and glycine 858 together coordinate (3R)-3-hydroxydecanoyl-CoA. In terms of domain architecture, MaoC-like spans 782–893 (APKRAPDYQV…VVDRGTIAIN (112 aa)). Residues 904 to 906 (AKI) carry the Microbody targeting signal motif.

This sequence belongs to the short-chain dehydrogenases/reductases (SDR) family. As to quaternary structure, monomer.

The protein localises to the peroxisome. It carries out the reaction a (3R)-3-hydroxyacyl-CoA = a (2E)-enoyl-CoA + H2O. It catalyses the reaction a (3R)-3-hydroxyacyl-CoA + NAD(+) = a 3-oxoacyl-CoA + NADH + H(+). Its pathway is lipid metabolism; fatty acid beta-oxidation. Functionally, second trifunctional enzyme acting on the beta-oxidation pathway for fatty acids, possessing hydratase-dehydrogenase-epimerase activities. Converts trans-2-enoyl-CoA via D-3-hydroxyacyl-CoA to 3-ketoacyl-CoA. This chain is Peroxisomal hydratase-dehydrogenase-epimerase, found in Candida tropicalis (Yeast).